A 383-amino-acid polypeptide reads, in one-letter code: Galactokinase (383 aa).

A substrate-binding site is contributed by 34-37 (EHTD). 124–130 (GAGLSSS) contacts ATP. Mg(2+) is bound by residues Ser-130 and Glu-162. The Proton acceptor role is filled by Asp-174. Tyr-223 is a binding site for substrate.

The protein belongs to the GHMP kinase family. GalK subfamily.

The protein resides in the cytoplasm. It catalyses the reaction alpha-D-galactose + ATP = alpha-D-galactose 1-phosphate + ADP + H(+). The protein operates within carbohydrate metabolism; galactose metabolism. Catalyzes the transfer of the gamma-phosphate of ATP to D-galactose to form alpha-D-galactose-1-phosphate (Gal-1-P). This chain is Galactokinase, found in Yersinia enterocolitica serotype O:8 / biotype 1B (strain NCTC 13174 / 8081).